Consider the following 592-residue polypeptide: A-type ATP synthase subunit A (592 aa).

ATP is bound at residue 233-240 (GPFGSGKT).

It belongs to the ATPase alpha/beta chains family. As to quaternary structure, has multiple subunits with at least A(3), B(3), C, D, E, F, H, I and proteolipid K(x).

The protein resides in the cell membrane. The catalysed reaction is ATP + H2O + 4 H(+)(in) = ADP + phosphate + 5 H(+)(out). Its function is as follows. Component of the A-type ATP synthase that produces ATP from ADP in the presence of a proton gradient across the membrane. The A chain is the catalytic subunit. This chain is A-type ATP synthase subunit A, found in Saccharolobus islandicus (strain Y.G.57.14 / Yellowstone #1) (Sulfolobus islandicus).